A 173-amino-acid polypeptide reads, in one-letter code: Shikimate kinase 1 (173 aa).

14–19 (GAGKST) is an ATP binding site. S18 provides a ligand contact to Mg(2+). Positions 36, 60, and 82 each coordinate substrate. R120 lines the ATP pocket. R140 contacts substrate. Q157 is a binding site for ATP.

The protein belongs to the shikimate kinase family. As to quaternary structure, monomer. It depends on Mg(2+) as a cofactor.

It localises to the cytoplasm. The enzyme catalyses shikimate + ATP = 3-phosphoshikimate + ADP + H(+). Its pathway is metabolic intermediate biosynthesis; chorismate biosynthesis; chorismate from D-erythrose 4-phosphate and phosphoenolpyruvate: step 5/7. Catalyzes the specific phosphorylation of the 3-hydroxyl group of shikimic acid using ATP as a cosubstrate. The protein is Shikimate kinase 1 of Sodalis glossinidius (strain morsitans).